A 441-amino-acid chain; its full sequence is Xaa-Pro dipeptidase (441 aa).

Residues Asp-244, Asp-255, His-336, Glu-381, and Glu-420 each coordinate Mn(2+).

This sequence belongs to the peptidase M24B family. Bacterial-type prolidase subfamily. Mn(2+) serves as cofactor.

It carries out the reaction Xaa-L-Pro dipeptide + H2O = an L-alpha-amino acid + L-proline. Functionally, splits dipeptides with a prolyl residue in the C-terminal position. This is Xaa-Pro dipeptidase from Xanthomonas euvesicatoria pv. vesicatoria (strain 85-10) (Xanthomonas campestris pv. vesicatoria).